Consider the following 310-residue polypeptide: Beta-lactamase AST-1 (310 aa).

An N-terminal signal peptide occupies residues Met1–Ala31. Cys32 carries N-palmitoyl cysteine lipidation. Cys32 is lipidated: S-diacylglycerol cysteine. The active-site Acyl-ester intermediate is Ser91. Substrate is bound at residue Ser151. The active-site Proton acceptor is the Glu187. Lys255–Gly257 contacts substrate.

This sequence belongs to the class-A beta-lactamase family.

Its subcellular location is the cell membrane. The catalysed reaction is a beta-lactam + H2O = a substituted beta-amino acid. With respect to regulation, inhibited by clavulanic acid. Its function is as follows. Confers high levels of resistance to amoxicillin, benzylpenicillin, piperacillin, ticarcillin and cephalothin. Not active against ceftazidime, cefotaxime and aztreonam. This chain is Beta-lactamase AST-1 (bla), found in Nocardia asteroides.